The sequence spans 360 residues: Peptide chain release factor 1 (360 aa).

Gln235 is modified (N5-methylglutamine). The segment covering 285–295 (RQAAEQADTRR) has biased composition (basic and acidic residues). The interval 285–309 (RQAAEQADTRRNLLGSGDRSDKIRT) is disordered.

Belongs to the prokaryotic/mitochondrial release factor family. Methylated by PrmC. Methylation increases the termination efficiency of RF1.

Its subcellular location is the cytoplasm. In terms of biological role, peptide chain release factor 1 directs the termination of translation in response to the peptide chain termination codons UAG and UAA. The sequence is that of Peptide chain release factor 1 from Actinobacillus pleuropneumoniae serotype 7 (strain AP76).